The chain runs to 61 residues: Photosystem II reaction center X protein (61 aa).

The chain crosses the membrane as a helical span at residues 26–46 (IGSFIAAALLIVVPATAFLIF).

This sequence belongs to the PsbX family. Type 2 subfamily. In terms of assembly, PSII consists of a core antenna complex that captures photons, and an electron transfer chain that converts photonic excitation into a charge separation. PSII forms dimeric complexes.

Its subcellular location is the cellular thylakoid membrane. Its function is as follows. Involved in the binding and/or turnover of quinones at the Q(B) site of Photosystem II. The protein is Photosystem II reaction center X protein of Prochlorococcus marinus (strain AS9601).